The chain runs to 263 residues: Protein YpjB (263 aa).

The segment covering 233–244 (DFDDSSSEDDPV) has biased composition (acidic residues). Positions 233 to 263 (DFDDSSSEDDPVENSPVVTSPVVSSSKSSFQ) are disordered. A compositionally biased stretch (low complexity) spans 245–263 (ENSPVVTSPVVSSSKSSFQ).

This is Protein YpjB (ypjB) from Escherichia coli (strain K12).